Reading from the N-terminus, the 709-residue chain is ATP-binding cassette sub-family F member 3 (709 aa).

N-acetylalanine is present on A2. S83 bears the Phosphoserine mark. The span at 129 to 143 (RLKAKQEKRSEKETL) shows a compositional bias: basic and acidic residues. A disordered region spans residues 129-171 (RLKAKQEKRSEKETLKTSNPLVLEEASASQAGSRKESRLESSG). 3 positions are modified to phosphoserine: S155, S157, and S161. Basic and acidic residues predominate over residues 161–171 (SRKESRLESSG). ABC transporter domains follow at residues 178 to 424 (VRIE…LNQQ) and 492 to 707 (LQLD…RREG). 210–217 (GRNGLGKT) lines the ATP pocket. The residue at position 283 (S283) is a Phosphoserine. ATP is bound at residue 525–532 (GENGAGKS).

This sequence belongs to the ABC transporter superfamily. ABCF family. EF3 subfamily.

Displays an antiviral effect against flaviviruses such as west Nile virus (WNV) in the presence of OAS1B. This is ATP-binding cassette sub-family F member 3 (Abcf3) from Mus musculus (Mouse).